The chain runs to 57 residues: Large ribosomal subunit protein bL32 (57 aa).

A compositionally biased stretch (basic residues) spans 1-16; sequence MAVQKSRKTRSKRGMR. The segment at 1–45 is disordered; it reads MAVQKSRKTRSKRGMRRSHDALTAPAQLSVDATSGETHRRHHMTA.

The protein belongs to the bacterial ribosomal protein bL32 family.

The chain is Large ribosomal subunit protein bL32 from Psychromonas ingrahamii (strain DSM 17664 / CCUG 51855 / 37).